The primary structure comprises 75 residues: U6-lycotoxin-Ls1h (75 aa).

Positions 1-21 are cleaved as a signal peptide; sequence MKLLLFTALVLVVISLIEVEA. The propeptide occupies 22–25; that stretch reads ENER.

The protein belongs to the neurotoxin 19 (CSTX) family. 06 (U6-Lctx) subfamily. In terms of processing, contains 4 disulfide bonds. In terms of tissue distribution, expressed by the venom gland.

It localises to the secreted. The protein is U6-lycotoxin-Ls1h of Lycosa singoriensis (Wolf spider).